We begin with the raw amino-acid sequence, 44 residues long: F420-non-reducing hydrogenase vhu subunit U (44 aa).

Residues U20 and C23 each coordinate Ni(2+). Residue U20 is a non-standard amino acid, selenocysteine. The propeptide at 27-44 (MIVEDAEGNVVFEIVNDE) is removed in mature form.

The protein belongs to the [NiFe]/[NiFeSe] hydrogenase large subunit family. In terms of assembly, the F420-non-reducing hydrogenase vhu is composed of four subunits; VhuA, VhuD, VhuG and VhuU. The cofactor is Ni(2+).

The polypeptide is F420-non-reducing hydrogenase vhu subunit U (vhuU) (Methanococcus voltae).